Reading from the N-terminus, the 179-residue chain is ATP-dependent protease subunit HslV (179 aa).

T8 is a catalytic residue. Na(+) contacts are provided by G163, C166, and T169.

This sequence belongs to the peptidase T1B family. HslV subfamily. In terms of assembly, a double ring-shaped homohexamer of HslV is capped on each side by a ring-shaped HslU homohexamer. The assembly of the HslU/HslV complex is dependent on binding of ATP.

It localises to the cytoplasm. It catalyses the reaction ATP-dependent cleavage of peptide bonds with broad specificity.. Its activity is regulated as follows. Allosterically activated by HslU binding. Functionally, protease subunit of a proteasome-like degradation complex believed to be a general protein degrading machinery. In Solibacter usitatus (strain Ellin6076), this protein is ATP-dependent protease subunit HslV.